Consider the following 161-residue polypeptide: Nucleotide-binding protein Mmwyl1_2033 (161 aa).

Belongs to the YajQ family.

Its function is as follows. Nucleotide-binding protein. The protein is Nucleotide-binding protein Mmwyl1_2033 of Marinomonas sp. (strain MWYL1).